We begin with the raw amino-acid sequence, 261 residues long: Carnitinyl-CoA dehydratase (261 aa).

Glu-111 functions as the Nucleophile in the catalytic mechanism. Glu-131 (proton acceptor) is an active-site residue.

This sequence belongs to the enoyl-CoA hydratase/isomerase family.

The catalysed reaction is (R)-carnitinyl-CoA = crotonobetainyl-CoA + H2O. It functions in the pathway amine and polyamine metabolism; carnitine metabolism. Functionally, catalyzes the reversible dehydration of L-carnitinyl-CoA to crotonobetainyl-CoA. The protein is Carnitinyl-CoA dehydratase of Escherichia coli O157:H7.